The sequence spans 170 residues: Anaphase-promoting complex subunit SWM1 (170 aa).

2 stretches are compositionally biased toward basic and acidic residues: residues 48 to 67 and 132 to 141; these read NTRT…RNSN and GANEPRKETI. 2 disordered regions span residues 48–81 and 122–141; these read NTRT…MTSE and LNGG…KETI.

Belongs to the APC13 family. As to quaternary structure, the APC/C is composed of at least 13 subunits that stay tightly associated throughout the cell cycle: APC1, APC2, APC4, APC5, APC9, APC11, CDC16, CDC23, CDC26, CDC27, DOC1, MND2 and SWM1. SWM1 interacts directly with CDC23 and APC5, and is required to tether APC9, CDC16, CDC26 and CDC27 to the complex.

It functions in the pathway protein modification; protein ubiquitination. Functionally, component of the anaphase promoting complex/cyclosome (APC/C), a cell cycle-regulated E3 ubiquitin-protein ligase complex that controls progression through mitosis and the G1 phase of the cell cycle. The APC/C is thought to confer substrate specificity and, in the presence of ubiquitin-conjugating E2 enzymes, it catalyzes the formation of protein-ubiquitin conjugates that are subsequently degraded by the 26S proteasome. In early mitosis, the APC/C is activated by CDC20 and targets securin PDS1, the B-type cyclin CLB5, and other anaphase inhibitory proteins for proteolysis, thereby triggering the separation of sister chromatids at the metaphase-to-anaphase transition. In late mitosis and in G1, degradation of CLB5 allows activation of the APC/C by CDH1, which is needed to destroy CDC20 and the B-type cyclin CLB2 to allow exit from mitosis and creating the low CDK state necessary for cytokinesis and for reforming prereplicative complexes in G1 prior to another round of replication. SWM1 is required for APC/C activity in meiosis. The polypeptide is Anaphase-promoting complex subunit SWM1 (SWM1) (Saccharomyces cerevisiae (strain ATCC 204508 / S288c) (Baker's yeast)).